Here is a 227-residue protein sequence, read N- to C-terminus: MFQEYLSVIVKGIPTSLLLTVVSLLIAFFLALFLTFLLSMENKWIKSAVNLYLTLFTGTPLLVQFFLIYAGPGQFQWIIDSPLWYVLSNAWFCAALALALNSAAYSTQLFHGAVKAIPKGQWESCGALGLNRIQTLKILIPYALKRALPSYSNEIILVFKGTALASTITIMDIMGYARQLYGTEYDALTIYGIAGGIYLIITGIATLLLRKLEKKVLAFERFEVSKA.

Residues Ile-13–Leu-209 form the ABC transmembrane type-1 domain. The next 5 membrane-spanning stretches (helical) occupy residues Leu-17–Leu-37, Leu-51–Gly-71, Ile-78–Leu-98, Ile-155–Gly-175, and Leu-188–Leu-208.

It belongs to the binding-protein-dependent transport system permease family. HisMQ subfamily. The complex is composed of two ATP-binding proteins (ArtP), two transmembrane proteins (ArtM and ArtQ) and a solute-binding protein (ArtI).

It is found in the cell inner membrane. Its function is as follows. Part of the ABC transporter complex ArtPIQM involved in arginine transport. Probably responsible for the translocation of the substrate across the membrane. This is Arginine ABC transporter permease protein ArtM (artM) from Haemophilus influenzae (strain ATCC 51907 / DSM 11121 / KW20 / Rd).